Here is a 120-residue protein sequence, read N- to C-terminus: Eukaryotic translation initiation factor 4E-binding protein 2 (120 aa).

Residues threonine 37 and threonine 46 each carry the phosphothreonine; by MTOR modification. Residues 54–60 carry the YXXXXLphi motif motif; the sequence is YDRKFLL. Serine 65 carries the post-translational modification Phosphoserine; by MTOR. Threonine 70 is modified (phosphothreonine; by MTOR). At serine 83 the chain carries Phosphoserine. 2 positions are modified to deamidated asparagine: asparagine 99 and asparagine 102. The short motif at 116 to 120 is the TOS motif element; the sequence is FEMDI.

Belongs to the eIF4E-binding protein family. Hypophosphorylated EIF4EBP2 interacts with EIF4E; phosphorylation of EIF4EBP2 by mTORC1 causes dissociation of the complex allowing EIF4G1/EIF4G3 to bind and consequent initiation of translation. Interacts (via TOS motif) with RPTOR; promoting phosphorylation by mTORC1. Interacts with PCMT1; required to prevent isoaspartate accumulation and convert isoaspartate to Asp. In terms of processing, phosphorylation at Thr-37, Thr-46, Ser-65, Thr-70 and Ser-83 is mediated by MTOR and corresponds to the hyperphosphorylated form: it abolishes binding to EIF4E by inducing folding of intrinsically disordered regions. First phosphorylated at Thr-37 and Thr-46 by MTOR, inducing folding of region encompassing residues from Pro-18 to Arg-62 of into a four-stranded beta-domain that sequesters the helical YXXXXLPhi motif into a partly buried beta-strand, blocking accessibility to EIF4E. Protein phosphorylated at Thr-37 and Thr-46 is however unstable and subsequent phosphorylation at Ser-65, Thr-70 and Ser-83 is required to stabilize the fold, decreasing affinity for EIF4E by a factor of 4000. Phosphorylated in response to insulin, EGF and PDGF. Deamidated at Asn-99 and Asn-102 to aspartate (Asp) in brain. Deamidation promotes interaction with RPTOR, subsequent phosphorylation by mTORC1 and increased translation, leading to impair kinetics of excitatory synaptic transmission. Deamidation takes place during postnatal development, when the PI3K-Akt-mTOR signaling is reduced, suggesting it acts as a compensatory mechanism to promote translation despite attenuated PI3K-Akt-mTOR signaling in neuron development. Deamidation converts Asn residues into a mixture of Asp and isoaspartate; interactions with PCMT1 is required to prevent isoaspartate accumulation and convert isoaspartate to Asp. Enriched in brain.

The protein localises to the cytoplasm. It localises to the nucleus. In terms of biological role, repressor of translation initiation involved in synaptic plasticity, learning and memory formation. Regulates EIF4E activity by preventing its assembly into the eIF4F complex: hypophosphorylated form of EIF4EBP2 competes with EIF4G1/EIF4G3 and strongly binds to EIF4E, leading to repress translation. In contrast, hyperphosphorylated form dissociates from EIF4E, allowing interaction between EIF4G1/EIF4G3 and EIF4E, leading to initiation of translation. EIF4EBP2 is enriched in brain and acts as a regulator of synapse activity and neuronal stem cell renewal via its ability to repress translation initiation. Mediates the regulation of protein translation by hormones, growth factors and other stimuli that signal through the MAP kinase and mTORC1 pathways. The protein is Eukaryotic translation initiation factor 4E-binding protein 2 of Mus musculus (Mouse).